A 359-amino-acid chain; its full sequence is Fructose-bisphosphate aldolase class 2 (359 aa).

Residue Ser-50 participates in D-glyceraldehyde 3-phosphate binding. The active-site Proton donor is the Asp-83. His-84, Asp-105, Glu-142, and His-198 together coordinate Zn(2+). A dihydroxyacetone phosphate-binding site is contributed by Gly-199. A Zn(2+)-binding site is contributed by His-232. Dihydroxyacetone phosphate-binding positions include 233–235 (GSS) and 275–278 (NIDT).

It belongs to the class II fructose-bisphosphate aldolase family. Requires Zn(2+) as cofactor.

The catalysed reaction is beta-D-fructose 1,6-bisphosphate = D-glyceraldehyde 3-phosphate + dihydroxyacetone phosphate. Its pathway is carbohydrate degradation; glycolysis; D-glyceraldehyde 3-phosphate and glycerone phosphate from D-glucose: step 4/4. Catalyzes the aldol condensation of dihydroxyacetone phosphate (DHAP or glycerone-phosphate) with glyceraldehyde 3-phosphate (G3P) to form fructose 1,6-bisphosphate (FBP) in gluconeogenesis and the reverse reaction in glycolysis. This is Fructose-bisphosphate aldolase class 2 (fbaA) from Synechocystis sp. (strain ATCC 27184 / PCC 6803 / Kazusa).